An 86-amino-acid chain; its full sequence is U15-lycotoxin-Ls1a (86 aa).

The N-terminal stretch at 1-20 (MNSKIFAVLFLLAFLSCVLS) is a signal peptide. A WAP domain is found at 21 to 66 (DQYCPKSSITACKKMNIRNDCCKDDDCTGGSWCCATPCGNFCKYPT). 5 cysteine pairs are disulfide-bonded: cysteine 24–cysteine 54, cysteine 32–cysteine 58, cysteine 41–cysteine 53, cysteine 42–cysteine 80, and cysteine 47–cysteine 62.

This sequence belongs to the venom protein 11 family. 01 (wap-1) subfamily. Contains 5 disulfide bonds. Expressed by the venom gland.

It is found in the secreted. Has antibacterial activity. This Lycosa singoriensis (Wolf spider) protein is U15-lycotoxin-Ls1a.